The following is a 40-amino-acid chain: Large ribosomal subunit protein bL36B (40 aa).

It belongs to the bacterial ribosomal protein bL36 family.

The chain is Large ribosomal subunit protein bL36B from Clavibacter michiganensis subsp. michiganensis (strain NCPPB 382).